A 907-amino-acid polypeptide reads, in one-letter code: Coatomer subunit beta'-1 (907 aa).

WD repeat units lie at residues 13–52, 55–94, 97–136, 140–180, 183–224, 227–266, 269–309, 351–389, and 461–501; these read QRSE…MVKS, VSEL…KVKV, AHTD…MCTQ, GHSH…PNFT, GHQK…CVQT, GHTH…LENT, YGLE…ASMD, SCDL…NRSF, and RIDV…SYLE. Composition is skewed to acidic residues over residues 850-866 and 874-887; these read ETED…EEVL and STDE…DEPE. A disordered region spans residues 850-887; sequence ETEDALDENGEPDEEVLEENKVEESTDEAVEVDADEPE.

It belongs to the WD repeat COPB2 family. In terms of assembly, oligomeric complex that consists of at least the alpha, beta, beta', gamma, delta, epsilon and zeta subunits.

The protein resides in the cytoplasm. It localises to the golgi apparatus membrane. The protein localises to the cytoplasmic vesicle. Its subcellular location is the COPI-coated vesicle membrane. Functionally, the coatomer is a cytosolic protein complex that binds to dilysine motifs and reversibly associates with Golgi non-clathrin-coated vesicles, which further mediate biosynthetic protein transport from the ER, via the Golgi up to the trans Golgi network. Coatomer complex is required for budding from Golgi membranes, and is essential for the retrograde Golgi-to-ER transport of dilysine-tagged proteins. In Oryza sativa subsp. japonica (Rice), this protein is Coatomer subunit beta'-1.